The chain runs to 689 residues: Glycine--tRNA ligase beta subunit (689 aa).

This sequence belongs to the class-II aminoacyl-tRNA synthetase family. Tetramer of two alpha and two beta subunits.

It localises to the cytoplasm. The catalysed reaction is tRNA(Gly) + glycine + ATP = glycyl-tRNA(Gly) + AMP + diphosphate. The protein is Glycine--tRNA ligase beta subunit of Yersinia enterocolitica serotype O:8 / biotype 1B (strain NCTC 13174 / 8081).